The chain runs to 274 residues: Putative phosphoenolpyruvate synthase regulatory protein (274 aa).

154–161 (GVSRCGKT) provides a ligand contact to ADP.

The protein belongs to the pyruvate, phosphate/water dikinase regulatory protein family. PSRP subfamily.

The catalysed reaction is [pyruvate, water dikinase] + ADP = [pyruvate, water dikinase]-phosphate + AMP + H(+). It carries out the reaction [pyruvate, water dikinase]-phosphate + phosphate + H(+) = [pyruvate, water dikinase] + diphosphate. Functionally, bifunctional serine/threonine kinase and phosphorylase involved in the regulation of the phosphoenolpyruvate synthase (PEPS) by catalyzing its phosphorylation/dephosphorylation. The polypeptide is Putative phosphoenolpyruvate synthase regulatory protein (Pseudomonas aeruginosa (strain LESB58)).